The sequence spans 1169 residues: Polyamine-transporting ATPase 13A2 (1169 aa).

Residues 1-44 lie on the Cytoplasmic side of the membrane; it reads MSADSSLLMGSTPPSYGTLTTGTSIDPLSSSASSVRLSGYCGSP. Residues 45–65 lie within the membrane without spanning it; sequence WRAIGYHAAVWMLAGIPWLLF. Residues 66–225 are Cytoplasmic-facing; sequence RWKPLWGVRL…ISIPVKSYLQ (160 aa). A helical transmembrane segment spans residues 226 to 246; it reads LLADEALNPYYGFQAFSIALW. Residues 247–250 lie on the Lumenal side of the membrane; the sequence is LADH. A helical membrane pass occupies residues 251 to 271; it reads YYWYALCIFLISAISICLALY. Topologically, residues 272–422 are cytoplasmic; it reads KTRKQSLTLR…SFKFYKHSMK (151 aa). Residues 423–443 traverse the membrane as a helical segment; sequence FVAALSVLALLGTVYSIIILY. Residues 444–458 lie on the Lumenal side of the membrane; it reads RNRVPVREIVIRALD. Residues 459–479 form a helical membrane-spanning segment; sequence LVTVVVPPALPAAMTVCTLYA. Residues 480–919 lie on the Cytoplasmic side of the membrane; the sequence is QSRLRTQGIF…REGRCSLDTS (440 aa). Catalysis depends on aspartate 508, which acts as the 4-aspartylphosphate intermediate. Residues aspartate 867 and aspartate 871 each contribute to the Mg(2+) site. A helical membrane pass occupies residues 920–940; sequence FSVFKYMALYSLTQFISVLIL. The Lumenal segment spans residues 941 to 946; that stretch reads YTINTN. A helical membrane pass occupies residues 947–967; the sequence is LGDLQFLAIDLVITTTVAVLM. At 968-993 the chain is on the cytoplasmic side; it reads SRTGPALTLVRARPPGALLSVPVLGS. Residues 994-1014 form a helical membrane-spanning segment; sequence LLLQVALVAGIQLGGYFLVIA. Topologically, residues 1015–1037 are lumenal; sequence QPWFVPLNRTVPAPDNLPNYENT. Asparagine 1022 is a glycosylation site (N-linked (GlcNAc...) asparagine). A helical membrane pass occupies residues 1038–1058; the sequence is VVFSLSGFQYLILAAAVSKGA. The Cytoplasmic portion of the chain corresponds to 1059-1069; the sequence is PFRQPLYTNVP. A helical membrane pass occupies residues 1070–1090; that stretch reads FLVALALLGSVLVGLILVPGL. Over 1091 to 1106 the chain is Lumenal; that stretch reads LQGPLGLRNIVDSSFK. A helical transmembrane segment spans residues 1107-1127; that stretch reads LLLLGLVAFNFVGAFMLESVL. The Cytoplasmic segment spans residues 1128-1169; it reads DQCLPACLRWLRPKRASKKQFKRLQQELAEHPWPTLPVGSVR.

The protein belongs to the cation transport ATPase (P-type) (TC 3.A.3) family. Type V subfamily. Interacts with MYCBP2; the interaction inhibits the ubiquitination of TSC2 by MYCBP2. Interacts with HDAC6; the interaction results in recruitment of HDAC6 to lysosomes to promote CTTN deacetylation. Post-translationally, autophosphorylated. Accumulates in an inactive autophosphorylated state and autophosphorylation is stimulated by phosphatidic acid and phosphatidylinositol 3,5-bisphosphate but not by Mn(2+) or Zn(2+). The presence of spermine results in a dose-dependent reduction in autophosphorylation.

Its subcellular location is the lysosome membrane. It is found in the late endosome membrane. It localises to the endosome. The protein localises to the multivesicular body membrane. The protein resides in the cytoplasmic vesicle. Its subcellular location is the autophagosome membrane. It catalyses the reaction spermidine(out) + ATP + H2O = spermidine(in) + ADP + phosphate + H(+). The catalysed reaction is spermine(out) + ATP + H2O = spermine(in) + ADP + phosphate + H(+). Accumulates in an inactive autophosphorylated state. The presence of spermine results in a dose-dependent reduction in autophosphorylation. Functionally, ATPase which acts as a lysosomal polyamine exporter with high affinity for spermine. Also stimulates cellular uptake of polyamines and protects against polyamine toxicity. Plays a role in intracellular cation homeostasis and the maintenance of neuronal integrity. Contributes to cellular zinc homeostasis. Confers cellular protection against Mn(2+) and Zn(2+) toxicity and mitochondrial stress. Required for proper lysosomal and mitochondrial maintenance. Regulates the autophagy-lysosome pathway through the control of SYT11 expression at both transcriptional and post-translational levels. Facilitates recruitment of deacetylase HDAC6 to lysosomes to deacetylate CTTN, leading to actin polymerization, promotion of autophagosome-lysosome fusion and completion of autophagy. Promotes secretion of exosomes as well as secretion of SCNA via exosomes. Plays a role in lipid homeostasis. The protein is Polyamine-transporting ATPase 13A2 of Mus musculus (Mouse).